A 134-amino-acid chain; its full sequence is Small ribosomal subunit protein uS9c (134 aa).

Belongs to the universal ribosomal protein uS9 family.

It localises to the plastid. It is found in the chloroplast. The protein is Small ribosomal subunit protein uS9c (rps9) of Thalassiosira pseudonana (Marine diatom).